A 117-amino-acid chain; its full sequence is MAMSNMTYNNVFDHAYEMLKENIRYDDIRDTDDLHDAIHMAADNAVPHYYADIFSVMASEGIDLEFEDSGLMPDTKDVIRILQARIYEQLTIDLWEDAEDLLNEYLEEVEEYEEDEE.

Homodimer. Interacts with HsdM (AC P08957), the M subunit of host type I methyltransferase restriction enzyme M.EcoKI; 1 Ocr dimer binds to M.EcoKI. Interacts with HsdR (AC P08956), the R subunit of host type I bifunctional endonuclease and methyltransferase restriction enzyme R.EcoKI; 2 Ocr dimers binds to R.EcoKI. Interacts with host PglX/BrxX (AC P0DUF9); this interaction inhibits the enzymatic activity of PglX/BrxX through high-affinity binding. Forms a 2:2 tetrameric complex with phage T7 OCR.

Its function is as follows. Prevents both degradation and modification of T7 DNA by the host restriction-modification complex. Structural mimic of the phosphate backbone of B-form DNA that binds to and completely occupies the DNA-binding sites of all known families of the complex type I DNA restriction enzymes. Thereby, inhibits the restriction endonuclease activity and protects the phage genome as it penetrates into host cytoplasm. Inhibits host transcription by binding to the bacterial RNAP and competing with sigma factors. Inhibits the host exclusion defense system BREX. The sequence is that of Protein Ocr from Escherichia phage T7 (Bacteriophage T7).